A 294-amino-acid polypeptide reads, in one-letter code: tRNA-cytidine(32) 2-sulfurtransferase (294 aa).

A PP-loop motif motif is present at residues Ser58–Ser63. Residues Cys133, Cys136, and Cys224 each coordinate [4Fe-4S] cluster.

It belongs to the TtcA family. Homodimer. Mg(2+) serves as cofactor. [4Fe-4S] cluster is required as a cofactor.

It is found in the cytoplasm. It catalyses the reaction cytidine(32) in tRNA + S-sulfanyl-L-cysteinyl-[cysteine desulfurase] + AH2 + ATP = 2-thiocytidine(32) in tRNA + L-cysteinyl-[cysteine desulfurase] + A + AMP + diphosphate + H(+). The protein operates within tRNA modification. Catalyzes the ATP-dependent 2-thiolation of cytidine in position 32 of tRNA, to form 2-thiocytidine (s(2)C32). The sulfur atoms are provided by the cysteine/cysteine desulfurase (IscS) system. This chain is tRNA-cytidine(32) 2-sulfurtransferase, found in Ruegeria pomeroyi (strain ATCC 700808 / DSM 15171 / DSS-3) (Silicibacter pomeroyi).